A 335-amino-acid polypeptide reads, in one-letter code: Protein-glutamate methylesterase/protein-glutamine glutaminase 3 (335 aa).

One can recognise a Response regulatory domain in the interval 2–119; it reads RIGIVNDMPL…GNPQTAAAPL (118 aa). Aspartate 53 bears the 4-aspartylphosphate mark. Residues 144-335 form the CheB-type methylesterase domain; it reads PKAGGARQRL…IAPRLAEVFD (192 aa). Residues serine 159, histidine 186, and aspartate 279 contribute to the active site.

Belongs to the CheB family. Phosphorylated by CheA. Phosphorylation of the N-terminal regulatory domain activates the methylesterase activity.

The protein localises to the cytoplasm. The enzyme catalyses [protein]-L-glutamate 5-O-methyl ester + H2O = L-glutamyl-[protein] + methanol + H(+). It catalyses the reaction L-glutaminyl-[protein] + H2O = L-glutamyl-[protein] + NH4(+). Involved in chemotaxis. Part of a chemotaxis signal transduction system that modulates chemotaxis in response to various stimuli. Catalyzes the demethylation of specific methylglutamate residues introduced into the chemoreceptors (methyl-accepting chemotaxis proteins or MCP) by CheR. Also mediates the irreversible deamidation of specific glutamine residues to glutamic acid. This Pseudomonas aeruginosa (strain ATCC 15692 / DSM 22644 / CIP 104116 / JCM 14847 / LMG 12228 / 1C / PRS 101 / PAO1) protein is Protein-glutamate methylesterase/protein-glutamine glutaminase 3.